The sequence spans 255 residues: Very-long-chain (3R)-3-hydroxyacyl-CoA dehydratase 2 (255 aa).

The Cytoplasmic portion of the chain corresponds to 3–42 (AAAAATAAAKGNGGGGGRAGAGDASGTRKKKGPGPLATAY). The interval 11–34 (AKGNGGGGGRAGAGDASGTRKKKG) is disordered. Residues 13 to 22 (GNGGGGGRAG) are compositionally biased toward gly residues. Residues 43–61 (LVIYNVVMTAGWLVIAVGL) traverse the membrane as a helical segment. Topologically, residues 62–80 (VRAYLAKGSYHSLYYSIEK) are lumenal. The chain crosses the membrane as a helical span at residues 81–98 (PLKFFQTGALLEILHCAI). Over 99-108 (GIVPSSVVLT) the chain is Cytoplasmic. The chain crosses the membrane as a helical span at residues 109 to 126 (SFQVMSRVFLIWAVTHSV). Residues 127–131 (KEVQS) are Lumenal-facing. The helical transmembrane segment at 132–147 (EDSVLLFVIAWTITEI) threads the bilayer. Residues 148-170 (IRYSFYTFSLLNHLPYLIKWARY) are Cytoplasmic-facing. Residues 171–188 (TLFIVLYPMGVSGELLTI) form a helical membrane-spanning segment. Residues tyrosine 177 and glutamate 184 contribute to the active site. The Lumenal portion of the chain corresponds to 189–218 (YAALPFVRQAGLYSISLPNKYNFSFDYYAF). The segment at 199–215 (GLYSISLPNKYNFSFDY) is may be involved in interaction with TECR. Residue asparagine 210 is glycosylated (N-linked (GlcNAc...) asparagine). Residues 219-236 (LILIMISYIPIFPQLYFH) traverse the membrane as a helical segment. The Cytoplasmic portion of the chain corresponds to 237-255 (MIHQRRKILSHTEEHKKFE).

Belongs to the very long-chain fatty acids dehydratase HACD family. In terms of assembly, may interact with enzymes of the ELO family (including ELOVL1); with those enzymes that mediate condensation, the first of the four steps of the reaction cycle responsible for fatty acids elongation, may be part of a larger fatty acids elongase complex. Interacts with BCAP31. Interacts (via the third lumenal loop) with TECR.

It localises to the endoplasmic reticulum membrane. It catalyses the reaction a very-long-chain (3R)-3-hydroxyacyl-CoA = a very-long-chain (2E)-enoyl-CoA + H2O. The enzyme catalyses (3R)-hydroxyhexadecanoyl-CoA = (2E)-hexadecenoyl-CoA + H2O. The catalysed reaction is (3R)-hydroxyoctadecanoyl-CoA = (2E)-octadecenoyl-CoA + H2O. It carries out the reaction (3R)-hydroxyeicosanoyl-CoA = (2E)-eicosenoyl-CoA + H2O. It catalyses the reaction (3R)-hydroxydocosanoyl-CoA = (2E)-docosenoyl-CoA + H2O. The enzyme catalyses (3R)-hydroxytetracosanoyl-CoA = (2E)-tetracosenoyl-CoA + H2O. The catalysed reaction is (3R)-hydroxyhexacosanoyl-CoA = (2E)-hexacosenoyl-CoA + H2O. Its pathway is lipid metabolism; fatty acid biosynthesis. Catalyzes the third of the very long-chain fatty acids (VLCFA) elongation four-step cycle (condensation, reduction, dehydration, and reduction). This endoplasmic reticulum-elongation process is characterized by the addition of two carbons to the lipid chain through each cycle. This enzyme catalyzes the dehydration of the 3-hydroxyacyl-CoA intermediate into trans-2,3-enoyl-CoA, within each cycle of elongation. Therefore, it participates in the production of various VLCFAs involved in multiple biological processes as precursors of membrane lipids and lipid mediators. In Pongo abelii (Sumatran orangutan), this protein is Very-long-chain (3R)-3-hydroxyacyl-CoA dehydratase 2.